The chain runs to 284 residues: Ribosomal RNA small subunit methyltransferase A (284 aa).

Residues asparagine 33, leucine 35, glycine 60, glutamate 81, aspartate 101, and asparagine 124 each contribute to the S-adenosyl-L-methionine site.

The protein belongs to the class I-like SAM-binding methyltransferase superfamily. rRNA adenine N(6)-methyltransferase family. RsmA subfamily.

It localises to the cytoplasm. The enzyme catalyses adenosine(1518)/adenosine(1519) in 16S rRNA + 4 S-adenosyl-L-methionine = N(6)-dimethyladenosine(1518)/N(6)-dimethyladenosine(1519) in 16S rRNA + 4 S-adenosyl-L-homocysteine + 4 H(+). In terms of biological role, specifically dimethylates two adjacent adenosines (A1518 and A1519) in the loop of a conserved hairpin near the 3'-end of 16S rRNA in the 30S particle. May play a critical role in biogenesis of 30S subunits. The chain is Ribosomal RNA small subunit methyltransferase A from Chlamydia felis (strain Fe/C-56) (Chlamydophila felis).